The primary structure comprises 308 residues: GATA transcription factor 10 (308 aa).

The GATA-type zinc finger occupies 214-268 (DGIVRICTHCETITTPQWRQGPSGPKTLCNACGVRFKSGRLVPEYRPASSPTFIP).

This sequence belongs to the type IV zinc-finger family. Class A subfamily.

It localises to the nucleus. Transcriptional activator that specifically binds 5'-GATA-3' or 5'-GAT-3' motifs within gene promoters. May be involved in the regulation of some light-responsive genes. The chain is GATA transcription factor 10 (GATA10) from Arabidopsis thaliana (Mouse-ear cress).